We begin with the raw amino-acid sequence, 197 residues long: Xanthine phosphoribosyltransferase (197 aa).

L20 and N27 together coordinate xanthine. 128–132 (ANGQA) contributes to the 5-phospho-alpha-D-ribose 1-diphosphate binding site. K156 is a binding site for xanthine.

Belongs to the purine/pyrimidine phosphoribosyltransferase family. Xpt subfamily. As to quaternary structure, homodimer.

The protein resides in the cytoplasm. It catalyses the reaction XMP + diphosphate = xanthine + 5-phospho-alpha-D-ribose 1-diphosphate. It functions in the pathway purine metabolism; XMP biosynthesis via salvage pathway; XMP from xanthine: step 1/1. Converts the preformed base xanthine, a product of nucleic acid breakdown, to xanthosine 5'-monophosphate (XMP), so it can be reused for RNA or DNA synthesis. The chain is Xanthine phosphoribosyltransferase from Bacillus cereus (strain ATCC 10987 / NRS 248).